Here is a 788-residue protein sequence, read N- to C-terminus: Calpastatin (788 aa).

Residues 1-11 are compositionally biased toward pro residues; the sequence is MSQPGPKPAAS. Disordered stretches follow at residues 1-262, 289-493, and 514-580; these read MSQP…TGPV, LLEK…MCSI, and TLAG…SQEQ. S11 is subject to Phosphoserine. The span at 12–21 shows a compositional bias: low complexity; sequence PRPSRGAAAR. The segment covering 38–49 has biased composition (basic and acidic residues); that stretch reads PGEKKGSDEKKA. Residues 65–87 are compositionally biased toward low complexity; the sequence is AATATKVTASSAATSKSPSMSTT. Residues 99–119 show a composition bias toward basic and acidic residues; it reads EGPDQKRPREQAVKTESKKPQ. K112 is covalently cross-linked (Glycyl lysine isopeptide (Lys-Gly) (interchain with G-Cter in SUMO2)). K129 bears the N6-acetyllysine mark. Residue S165 is modified to Phosphoserine. T216 carries the post-translational modification Phosphothreonine. Position 219 is a phosphoserine (S219). Residues 246–256 show a composition bias toward basic and acidic residues; it reads GGHEDTNRDDP. The stretch at 251–303 is one Inhibitory domain 1 repeat; sequence TNRDDPPYTGPVVLDPMYSTYLEALGIKEGTIPPEYRKLLEKNEGITQPLPDS. 2 positions are modified to phosphoserine: S303 and S324. Composition is skewed to polar residues over residues 318–328 and 369–380; these read SDFTCSSPTGK and QALQALSDSLGT. Residues 384–436 form an Inhibitory domain 2 repeat; sequence DPPSHVSQAEQVKEAKAKEERQEKCGEDEDTVPAEYRLKPAKDKDGKPLLPEP. Basic and acidic residues-rich tracts occupy residues 394–408 and 419–430; these read QVKE…QEKC and YRLKPAKDKDGK. Residues 441–453 show a composition bias toward low complexity; the sequence is KSLSESELIGELS. Phosphoserine occurs at positions 444, 446, and 453. Residue T479 is modified to Phosphothreonine. S518 bears the Phosphoserine mark. Positions 522-570 are enriched in basic and acidic residues; sequence READPEHEKTVEDKVKEKAKEEEHEKLGEKEETVPPDYRLEEVKDKDGK. Residues 524-577 form an Inhibitory domain 3 repeat; the sequence is ADPEHEKTVEDKVKEKAKEEEHEKLGEKEETVPPDYRLEEVKDKDGKPLLPKES. A phosphoserine mark is found at S594, S605, S653, and S655. A disordered region spans residues 620–788; sequence VVSQTPAPST…PKAKEDARHS (169 aa). One copy of the Inhibitory domain 4 repeat lies at 661–714; sequence PDPDENKPLDDKVKEKIKPEHSEKLGERDDTIPPEYRHLLDNDGKDKPEKPPTK. Composition is skewed to basic and acidic residues over residues 661–726 and 759–788; these read PDPD…RDPI and ASKD…ARHS.

This sequence belongs to the protease inhibitor I27 (calpastatin) family. As to expression, isoform 2 is the major form in all tissues examined. Isoform 1 accounts for 5-10% in tissues such as skeletal muscle, liver and brain, and 30% in myoblasts. Isoforms 4 and 5 are testis-specific. Isoform 6 is highly expressed in heart and skeletal muscle with lower levels in liver, brain and testis. Isoform 7 is expressed at high levels in liver.

Functionally, specific inhibition of calpain (calcium-dependent cysteine protease). Plays a key role in postmortem tenderization of meat and have been proposed to be involved in muscle protein degradation in living tissue. The protein is Calpastatin (Cast) of Mus musculus (Mouse).